The sequence spans 75 residues: Kappa-scoloptoxin(03)-Ssm1e (75 aa).

The first 23 residues, 1 to 23, serve as a signal peptide directing secretion; that stretch reads MKSSMAILLVMALIIFTLDKNYS.

It belongs to the scoloptoxin-03 family. Post-translationally, contains 3 disulfide bonds. Expressed by the venom gland.

It localises to the secreted. In terms of biological role, inhibits voltage-gated potassium channels. The sequence is that of Kappa-scoloptoxin(03)-Ssm1e from Scolopendra mutilans (Chinese red-headed centipede).